A 596-amino-acid chain; its full sequence is Proline--tRNA ligase (596 aa).

Belongs to the class-II aminoacyl-tRNA synthetase family. ProS type 1 subfamily. In terms of assembly, homodimer.

It is found in the cytoplasm. The enzyme catalyses tRNA(Pro) + L-proline + ATP = L-prolyl-tRNA(Pro) + AMP + diphosphate. Functionally, catalyzes the attachment of proline to tRNA(Pro) in a two-step reaction: proline is first activated by ATP to form Pro-AMP and then transferred to the acceptor end of tRNA(Pro). As ProRS can inadvertently accommodate and process non-cognate amino acids such as alanine and cysteine, to avoid such errors it has two additional distinct editing activities against alanine. One activity is designated as 'pretransfer' editing and involves the tRNA(Pro)-independent hydrolysis of activated Ala-AMP. The other activity is designated 'posttransfer' editing and involves deacylation of mischarged Ala-tRNA(Pro). The misacylated Cys-tRNA(Pro) is not edited by ProRS. This Prochlorococcus marinus (strain NATL2A) protein is Proline--tRNA ligase.